A 459-amino-acid polypeptide reads, in one-letter code: Interleukin-1 receptor-associated kinase 4 (459 aa).

Position 1 is an N-acetylmethionine (methionine 1). Positions 20–104 (RKLSDFIDPQ…APATLLLPDA (85 aa)) constitute a Death domain. Lysine 34 carries the post-translational modification N6-acetyllysine. Positions 115 to 161 (REAATVAQTHGPCQEKDRTSVMPMPKLEHSCEPPDSSSPDNRSVESS) are disordered. The Protein kinase domain maps to 186-454 (SAGGNRMGEG…PDIAKVQQLL (269 aa)). Residues 192 to 200 (MGEGGFGVV) and lysine 213 contribute to the ATP site. The active-site Proton acceptor is aspartate 311. ATP is bound by residues 313–316 (KSAN) and aspartate 329. Phosphothreonine is present on residues threonine 342 and threonine 345. Serine 346 carries the phosphoserine modification.

This sequence belongs to the protein kinase superfamily. TKL Ser/Thr protein kinase family. Pelle subfamily. In terms of assembly, associates with MYD88 and IRAK2 to form a ternary complex called the Myddosome. Once phosphorylated, IRAK4 dissociates from the receptor complex and then associates with the TNF receptor-associated factor 6 (TRAF6), IRAK1, and PELI1; this intermediate complex is required for subsequent NF-kappa-B activation. Direct binding of SMAD6 to PELI1 prevents complex formation and hence negatively regulates IL1R-TLR signaling and eventually NF-kappa-B-mediated gene expression. Interacts with IL1RL1. Interacts (when phosphorylated) with IRAK1. May interact (when phosphorylated) with IRAK3. The cofactor is Mg(2+). Phosphorylated.

Its subcellular location is the cytoplasm. It catalyses the reaction L-seryl-[protein] + ATP = O-phospho-L-seryl-[protein] + ADP + H(+). The catalysed reaction is L-threonyl-[protein] + ATP = O-phospho-L-threonyl-[protein] + ADP + H(+). Serine/threonine-protein kinase that plays a critical role in initiating innate immune response against foreign pathogens. Involved in Toll-like receptor (TLR) and IL-1R signaling pathways. Is rapidly recruited by MYD88 to the receptor-signaling complex upon TLR activation to form the Myddosome together with IRAK2. Phosphorylates initially IRAK1, thus stimulating the kinase activity and intensive autophosphorylation of IRAK1. Phosphorylates E3 ubiquitin ligases Pellino proteins (PELI1, PELI2 and PELI3) to promote pellino-mediated polyubiquitination of IRAK1. Then, the ubiquitin-binding domain of IKBKG/NEMO binds to polyubiquitinated IRAK1 bringing together the IRAK1-MAP3K7/TAK1-TRAF6 complex and the NEMO-IKKA-IKKB complex. In turn, MAP3K7/TAK1 activates IKKs (CHUK/IKKA and IKBKB/IKKB) leading to NF-kappa-B nuclear translocation and activation. Alternatively, phosphorylates TIRAP to promote its ubiquitination and subsequent degradation. Phosphorylates NCF1 and regulates NADPH oxidase activation after LPS stimulation suggesting a similar mechanism during microbial infections. This chain is Interleukin-1 receptor-associated kinase 4 (Irak4), found in Mus musculus (Mouse).